The primary structure comprises 264 residues: Phosphate import ATP-binding protein PstB 1 (264 aa).

One can recognise an ABC transporter domain in the interval 20 to 259; sequence LETRDLNIFY…PKIKLTEDYI (240 aa). 52-59 is an ATP binding site; that stretch reads GASGSGKS.

The protein belongs to the ABC transporter superfamily. Phosphate importer (TC 3.A.1.7) family. In terms of assembly, the complex is composed of two ATP-binding proteins (PstB), two transmembrane proteins (PstC and PstA) and a solute-binding protein (PstS).

The protein localises to the cell membrane. It carries out the reaction phosphate(out) + ATP + H2O = ADP + 2 phosphate(in) + H(+). Its function is as follows. Part of the ABC transporter complex PstSACB involved in phosphate import. Responsible for energy coupling to the transport system. The protein is Phosphate import ATP-binding protein PstB 1 of Ligilactobacillus salivarius (strain UCC118) (Lactobacillus salivarius).